Here is a 406-residue protein sequence, read N- to C-terminus: Putative cyclin-F3-2 (406 aa).

Positions 1–107 (MARPRTRSVA…PGAAGGPWQL (107 aa)) are disordered. Composition is skewed to low complexity over residues 11–21 (RMEATAAAAAA) and 29–57 (NPDG…NAGE).

It belongs to the cyclin family. Cyclin F subfamily.

This is Putative cyclin-F3-2 (CYCF3-2) from Oryza sativa subsp. japonica (Rice).